We begin with the raw amino-acid sequence, 245 residues long: Uridylate kinase (245 aa).

Position 18–21 (18–21 (KLSG)) interacts with ATP. UMP is bound at residue Gly-60. ATP is bound by residues Gly-61 and Arg-65. UMP contacts are provided by residues Asp-80 and 141-148 (TGNPFFTT). Residues Thr-168, Tyr-174, and Asp-177 each contribute to the ATP site.

The protein belongs to the UMP kinase family. In terms of assembly, homohexamer.

It is found in the cytoplasm. The enzyme catalyses UMP + ATP = UDP + ADP. It participates in pyrimidine metabolism; CTP biosynthesis via de novo pathway; UDP from UMP (UMPK route): step 1/1. Inhibited by UTP. In terms of biological role, catalyzes the reversible phosphorylation of UMP to UDP. In Pseudomonas paraeruginosa (strain DSM 24068 / PA7) (Pseudomonas aeruginosa (strain PA7)), this protein is Uridylate kinase.